Reading from the N-terminus, the 358-residue chain is Src kinase-associated phosphoprotein 2 (358 aa).

Phosphoserine is present on residues S6 and S9. The tract at residues 60–108 is disordered; that stretch reads PQEFQDKGDAEEGDEYDDPFAGPPDTISLASERYDKDDDGPSDGNQFPP. Y75 bears the Phosphotyrosine mark. Phosphoserine occurs at positions 87 and 90. Residues 116 to 219 enclose the PH domain; the sequence is FVIKAGYLEK…WVQQLKFILQ (104 aa). Phosphotyrosine occurs at positions 151 and 197. Residue S223 is modified to Phosphoserine. The tract at residues 227 to 293 is disordered; the sequence is PEDEDEKGDL…DSVQHPSGDK (67 aa). Residues 243-253 are compositionally biased toward low complexity; sequence PVPVSSPQRSQ. Positions 255–270 are enriched in acidic residues; it reads IDDEIYEELPEEEEDT. The residue at position 260 (Y260) is a Phosphotyrosine. Phosphoserine is present on residues S272, S282, and S285. A compositionally biased stretch (basic and acidic residues) spans 274–293; that stretch reads KMDEQGKGSRDSVQHPSGDK. The region spanning 296–357 is the SH3 domain; that stretch reads DYANFYQGLW…PKAYLMEMYD (62 aa).

It belongs to the SKAP family. As to quaternary structure, interacts with FYB1, which is required for SKAP2 protein stability. Interacts with PTPNS1. Part of a complex consisting of SKAP2, FYB1 and PTPNS1. Part of a complex consisting of SKAP2, FYB1 and LILRB3. Interacts with LAT, GRB2, PTK2B, and PRAM1. May interact with actin. May interact with FYN, HCK and LYN. Interacts with FASLG.

The protein localises to the cytoplasm. In terms of biological role, may be involved in B-cell and macrophage adhesion processes. In B-cells, may act by coupling the B-cell receptor (BCR) to integrin activation. May play a role in src signaling pathway. In Rattus norvegicus (Rat), this protein is Src kinase-associated phosphoprotein 2 (Skap2).